The sequence spans 323 residues: Olfactory receptor 5P58 (323 aa).

The Extracellular portion of the chain corresponds to 1 to 28; sequence MAFLEDGNHTAVTEFILVGLTDDPVLKV. Asparagine 8 carries an N-linked (GlcNAc...) asparagine glycan. Residues 29–49 form a helical membrane-spanning segment; sequence ILFTIILCIYLVTVSGNLSTI. Residues 50–57 are Cytoplasmic-facing; it reads LLIRVSSQ. A helical membrane pass occupies residues 58-78; it reads LHHPMYFFLSHLASVDLGYSS. The Extracellular segment spans residues 79–102; the sequence is SVTPNMLINFLAENNTISYIGCSI. An N-linked (GlcNAc...) asparagine glycan is attached at asparagine 92. Cysteine 100 and cysteine 192 are oxidised to a cystine. Residues 103–123 form a helical membrane-spanning segment; the sequence is QFGSATFFGVLECFLLAVMAY. Topologically, residues 124–136 are cytoplasmic; that stretch reads DRFVAICNPLLYS. Residues 137-157 form a helical membrane-spanning segment; sequence IKMSTQVCVKLVVGSYIGSSL. Over 158–199 the chain is Extracellular; it reads NASFVTVSIFNLLFCGPNKINHFFCDFDPLIELSCSDVSVPV. The chain crosses the membrane as a helical span at residues 200-220; sequence AVTSCSAGLITMITVFVIAVS. Over 221-240 the chain is Cytoplasmic; sequence YTYILITVLKMRSTEGRHKA. The chain crosses the membrane as a helical span at residues 241–261; it reads FSTCTSHLTAVTLFYGTVTFI. Residues 262–274 are Extracellular-facing; that stretch reads YVMPKSNYSTDQN. An N-linked (GlcNAc...) asparagine glycan is attached at asparagine 268. A helical membrane pass occupies residues 275–295; the sequence is KVVSVFYMVVIPMLNPLIYSL. Over 296-323 the chain is Cytoplasmic; the sequence is RNNEIKGALKRQLGKKIFSQSNILFCKS.

The protein belongs to the G-protein coupled receptor 1 family.

The protein localises to the cell membrane. Functionally, potential odorant receptor. In Mus musculus (Mouse), this protein is Olfactory receptor 5P58.